Reading from the N-terminus, the 473-residue chain is Phosphatidylserine synthase 1 (473 aa).

Ala2 carries the post-translational modification N-acetylalanine. Topologically, residues 2–35 (ASCVGSRTLSKDDVNYRMHFRMINEQQVEDITID) are cytoplasmic. Residues 36–56 (FFYRPHTITLLSFTIISLMYF) traverse the membrane as a helical segment. At 57–72 (AFTRDDSVPEDNIWRG) the chain is on the lumenal side. Residues 73–93 (ILSVIFFFLIISVLAFPNGPF) form a helical membrane-spanning segment. Residues 94 to 102 (TRPHPALWR) lie on the Cytoplasmic side of the membrane. Residues 103-123 (MVFGLSVLYFLFLVFLLFLNF) form a helical membrane-spanning segment. The Lumenal portion of the chain corresponds to 124–186 (EQVKSLMYWL…AMKALLIRSY (63 aa)). The chain crosses the membrane as a helical span at residues 187–207 (GLCWTISITWELTELFFMHLL). At 208–216 (PNFAECWWD) the chain is on the cytoplasmic side. The chain crosses the membrane as a helical span at residues 217–237 (QVILDILLCNGGGIWLGMVVC). At 238 to 286 (RFLEMRTYHWASFKDIHTTTGKIKRAVLQFTPASWTYVRWFDPKSSFQR) the chain is on the lumenal side. The helical transmembrane segment at 287-307 (VAGIYLFMIIWQLTELNTFFL) threads the bilayer. Residues 308-319 (KHIFVFQASHPL) are Cytoplasmic-facing. The helical transmembrane segment at 320–342 (SWGRILFIGCITAPTVRQYYAYL) threads the bilayer. Topologically, residues 343-355 (TDTQCKRVGTQCW) are lumenal. Residues 356–376 (VFGVIGFLEAIVCIKFGQDLF) traverse the membrane as a helical segment. At 377 to 383 (SKTQILY) the chain is on the cytoplasmic side. A helical membrane pass occupies residues 384–404 (VMLWLLCVAFTTFLCLYGMVW). The Lumenal portion of the chain corresponds to 405 to 473 (YAEHYGHREK…SKVTNGVGKK (69 aa)). Residues Ser417, Ser425, Ser442, and Ser454 each carry the phosphoserine modification. Residues 428 to 473 (ISWHHGKGSKGSEDSPPKHSSNHESHSSRRRNRHSKSKVTNGVGKK) are disordered. Residues 437–454 (KGSEDSPPKHSSNHESHS) show a composition bias toward basic and acidic residues. Residues 455–464 (SRRRNRHSKS) are compositionally biased toward basic residues.

It belongs to the phosphatidyl serine synthase family. As to expression, expressed in kidney, testis, lung, skeletal muscle, liver brain, heart and spleen with highest expression in testis, liver, heart and brain.

The protein localises to the endoplasmic reticulum membrane. The catalysed reaction is a 1,2-diacyl-sn-glycero-3-phosphoethanolamine + L-serine = a 1,2-diacyl-sn-glycero-3-phospho-L-serine + ethanolamine. It catalyses the reaction a 1,2-diacyl-sn-glycero-3-phosphocholine + L-serine = a 1,2-diacyl-sn-glycero-3-phospho-L-serine + choline. It participates in phospholipid metabolism; phosphatidylserine biosynthesis. With respect to regulation, potently inhibited by choline in the mitochondria-associated membrane (MAM). Very little inhibition by choline in the endoplasmic reticulum (ER) per se. Catalyzes a base-exchange reaction in which the polar head group of phosphatidylethanolamine (PE) or phosphatidylcholine (PC) is replaced by L-serine. Catalyzes mainly the conversion of phosphatidylcholine. Also converts, in vitro and to a lesser extent, phosphatidylethanolamine. The chain is Phosphatidylserine synthase 1 (Ptdss1) from Mus musculus (Mouse).